The sequence spans 121 residues: uncharacterized protein (121 aa).

Helical transmembrane passes span 1–21 (MILW…IMPV), 55–75 (LKYI…FCSI), and 92–112 (LFFK…IHFL).

The protein resides in the membrane. This is an uncharacterized protein from Saccharomyces cerevisiae (strain ATCC 204508 / S288c) (Baker's yeast).